We begin with the raw amino-acid sequence, 345 residues long: 3-isopropylmalate dehydrogenase (345 aa).

Residues R94, R104, R132, and D216 each contribute to the substrate site. Positions 216, 240, and 244 each coordinate Mg(2+). Position 274-286 (274-286 (GSAPDIAGQGIAN)) interacts with NAD(+).

This sequence belongs to the isocitrate and isopropylmalate dehydrogenases family. LeuB type 1 subfamily. As to quaternary structure, homodimer. Mg(2+) serves as cofactor. Mn(2+) is required as a cofactor.

The protein localises to the cytoplasm. The catalysed reaction is (2R,3S)-3-isopropylmalate + NAD(+) = 4-methyl-2-oxopentanoate + CO2 + NADH. The protein operates within amino-acid biosynthesis; L-leucine biosynthesis; L-leucine from 3-methyl-2-oxobutanoate: step 3/4. Catalyzes the oxidation of 3-carboxy-2-hydroxy-4-methylpentanoate (3-isopropylmalate) to 3-carboxy-4-methyl-2-oxopentanoate. The product decarboxylates to 4-methyl-2 oxopentanoate. The sequence is that of 3-isopropylmalate dehydrogenase from Streptococcus pneumoniae (strain ATCC BAA-255 / R6).